The chain runs to 420 residues: Exodeoxyribonuclease 7 large subunit (420 aa).

This sequence belongs to the XseA family. As to quaternary structure, heterooligomer composed of large and small subunits.

The protein localises to the cytoplasm. It catalyses the reaction Exonucleolytic cleavage in either 5'- to 3'- or 3'- to 5'-direction to yield nucleoside 5'-phosphates.. In terms of biological role, bidirectionally degrades single-stranded DNA into large acid-insoluble oligonucleotides, which are then degraded further into small acid-soluble oligonucleotides. The sequence is that of Exodeoxyribonuclease 7 large subunit from Helicobacter pylori (strain G27).